A 299-amino-acid chain; its full sequence is Ethylmalonyl-CoA decarboxylase (299 aa).

An N6-acetyllysine; alternate modification is found at K209. K209 is subject to N6-succinyllysine; alternate. K293 carries the post-translational modification N6-succinyllysine.

The protein belongs to the enoyl-CoA hydratase/isomerase family.

It is found in the cytoplasm. The protein localises to the cytosol. It catalyses the reaction (2S)-ethylmalonyl-CoA + H(+) = butanoyl-CoA + CO2. It carries out the reaction (S)-methylmalonyl-CoA + H(+) = propanoyl-CoA + CO2. The catalysed reaction is (2R)-ethylmalonyl-CoA + H(+) = butanoyl-CoA + CO2. In terms of biological role, decarboxylates ethylmalonyl-CoA, a potentially toxic metabolite, to form butyryl-CoA, suggesting it might be involved in metabolite proofreading. Acts preferentially on (S)-ethylmalonyl-CoA but also has some activity on the (R)-isomer. Also has methylmalonyl-CoA decarboxylase activity at lower level. This Rattus norvegicus (Rat) protein is Ethylmalonyl-CoA decarboxylase (Echdc1).